The sequence spans 391 residues: MAERVRVRVRKKKKSKRRKILKRIMLLFALALLVVVGLGGYKLYKTINAADESYDALSRGNKSNLRNEVVDMKKKPFSILFMGIEDYATKGQKGRSDSLIVVTLDPKNKTMKMLSIPRDTRVQLAGDTTGSKTKINAAYSKGGKDETVETVENFLQIPIDKYVTVDFDGFKDVINEVGGIDVDVPFDFDEKSDVDESKRIYFKKGEMHLNGEEALAYARMRKQDKRGDFGRNDRQKQILNALIDRMSSASNIAKIDKIAEKASENVETNIRITEGLALQQIYSGFTSKKIDTLSITGSDLYLGPNNTYYFEPDATNLEKVRKTLQEHLDYTPDTSTGTSGTEDGTDSSSSSGSTGSTGTTTDGTTNGSSYSNDSSTSSNNSTTNSTTDSSY.

At methionine 1–arginine 23 the chain is on the cytoplasmic side. Residues isoleucine 24–tyrosine 44 traverse the membrane as a helical; Signal-anchor for type II membrane protein segment. Topologically, residues lysine 45–tyrosine 391 are extracellular. Positions aspartate 329–tyrosine 391 are disordered. Over residues aspartate 333–tyrosine 391 the composition is skewed to low complexity.

This sequence belongs to the LytR/CpsA/Psr (LCP) family.

It localises to the cell membrane. Its pathway is cell wall biogenesis. Its function is as follows. May catalyze the final step in cell wall teichoic acid biosynthesis, the transfer of the anionic cell wall polymers (APs) from their lipid-linked precursor to the cell wall peptidoglycan (PG). In Bacillus subtilis (strain 168), this protein is Polyisoprenyl-teichoic acid--peptidoglycan teichoic acid transferase TagV.